The sequence spans 864 residues: Leucine--tRNA ligase (864 aa).

Positions 42–52 (PYPSGKLHMGH) match the 'HIGH' region motif. The 'KMSKS' region motif lies at 624–628 (KMSKS). ATP is bound at residue K627.

The protein belongs to the class-I aminoacyl-tRNA synthetase family.

It localises to the cytoplasm. The enzyme catalyses tRNA(Leu) + L-leucine + ATP = L-leucyl-tRNA(Leu) + AMP + diphosphate. The protein is Leucine--tRNA ligase of Burkholderia ambifaria (strain ATCC BAA-244 / DSM 16087 / CCUG 44356 / LMG 19182 / AMMD) (Burkholderia cepacia (strain AMMD)).